The chain runs to 79 residues: Conotoxin ba-2281 (79 aa).

The N-terminal stretch at 1-24 (MNRMGFFLMLTAAVLLTSLVCTEA) is a signal peptide. Positions 25-52 (TPADESKVKRARWSRIEGSRLFRHRLPK) are excised as a propeptide. 3 cysteine pairs are disulfide-bonded: Cys-58-Cys-66, Cys-61-Cys-71, and Cys-65-Cys-76. 4-hydroxyproline occurs at positions 59, 67, 68, and 73.

In terms of tissue distribution, expressed by the venom duct.

Its subcellular location is the secreted. This Conus bayani (Bayan's cone) protein is Conotoxin ba-2281.